The following is a 149-amino-acid chain: UPF0310 protein SSO2595 (149 aa).

Belongs to the UPF0310 family.

The polypeptide is UPF0310 protein SSO2595 (Saccharolobus solfataricus (strain ATCC 35092 / DSM 1617 / JCM 11322 / P2) (Sulfolobus solfataricus)).